The chain runs to 491 residues: Anthranilate synthase component 1 (491 aa).

L-tryptophan is bound by residues S49 and 271–273 (PYL). 306 to 307 (GT) contributes to the chorismate binding site. E333 provides a ligand contact to Mg(2+). Residues Y421, R441, 455 to 457 (GAG), and G457 contribute to the chorismate site. E470 is a binding site for Mg(2+).

The protein belongs to the anthranilate synthase component I family. Heterotetramer consisting of two non-identical subunits: a beta subunit (TrpG) and a large alpha subunit (TrpE). It depends on Mg(2+) as a cofactor.

It carries out the reaction chorismate + L-glutamine = anthranilate + pyruvate + L-glutamate + H(+). The protein operates within amino-acid biosynthesis; L-tryptophan biosynthesis; L-tryptophan from chorismate: step 1/5. With respect to regulation, feedback inhibited by tryptophan. In terms of biological role, part of a heterotetrameric complex that catalyzes the two-step biosynthesis of anthranilate, an intermediate in the biosynthesis of L-tryptophan. In the first step, the glutamine-binding beta subunit (TrpG) of anthranilate synthase (AS) provides the glutamine amidotransferase activity which generates ammonia as a substrate that, along with chorismate, is used in the second step, catalyzed by the large alpha subunit of AS (TrpE) to produce anthranilate. In the absence of TrpG, TrpE can synthesize anthranilate directly from chorismate and high concentrations of ammonia. This chain is Anthranilate synthase component 1 (trpE), found in Neisseria meningitidis serogroup A / serotype 4A (strain DSM 15465 / Z2491).